The following is a 639-amino-acid chain: UvrABC system protein C (639 aa).

The GIY-YIG domain occupies 20-97; sequence ERSGVYRMFD…IKKFQPKFNI (78 aa). Residues 207–242 enclose the UVR domain; sequence KELQENLSRKMEELSSQMRFEEAAEIRDRIKALSYV.

The protein belongs to the UvrC family. In terms of assembly, interacts with UvrB in an incision complex.

It is found in the cytoplasm. Its function is as follows. The UvrABC repair system catalyzes the recognition and processing of DNA lesions. UvrC both incises the 5' and 3' sides of the lesion. The N-terminal half is responsible for the 3' incision and the C-terminal half is responsible for the 5' incision. This Rickettsia conorii (strain ATCC VR-613 / Malish 7) protein is UvrABC system protein C.